Consider the following 428-residue polypeptide: Enolase (428 aa).

Residue glutamine 163 participates in (2R)-2-phosphoglycerate binding. Glutamate 205 (proton donor) is an active-site residue. Positions 242, 285, and 312 each coordinate Mg(2+). (2R)-2-phosphoglycerate contacts are provided by lysine 337, arginine 366, serine 367, and lysine 388. Lysine 337 acts as the Proton acceptor in catalysis.

This sequence belongs to the enolase family. Mg(2+) is required as a cofactor.

The protein resides in the cytoplasm. It localises to the secreted. The protein localises to the cell surface. It catalyses the reaction (2R)-2-phosphoglycerate = phosphoenolpyruvate + H2O. It functions in the pathway carbohydrate degradation; glycolysis; pyruvate from D-glyceraldehyde 3-phosphate: step 4/5. Its function is as follows. Catalyzes the reversible conversion of 2-phosphoglycerate (2-PG) into phosphoenolpyruvate (PEP). It is essential for the degradation of carbohydrates via glycolysis. This chain is Enolase, found in Neisseria meningitidis serogroup C / serotype 2a (strain ATCC 700532 / DSM 15464 / FAM18).